A 51-amino-acid polypeptide reads, in one-letter code: Defensin (51 aa).

Intrachain disulfides connect cysteine 3–cysteine 31, cysteine 17–cysteine 36, and cysteine 21–cysteine 38. Phenylalanine 51 carries the post-translational modification Phenylalanine amide.

It is found in the secreted. Functionally, antibacterial peptide against Gram-positive and Gram-negative bacteria and fungi. This Bombus pascuorum (Common carder bumblebee) protein is Defensin.